Here is a 293-residue protein sequence, read N- to C-terminus: 4-hydroxy-tetrahydrodipicolinate synthase (293 aa).

Pyruvate is bound at residue T45. Y133 functions as the Proton donor/acceptor in the catalytic mechanism. The active-site Schiff-base intermediate with substrate is the K161. Position 203 (I203) interacts with pyruvate.

This sequence belongs to the DapA family. As to quaternary structure, homotetramer; dimer of dimers.

Its subcellular location is the cytoplasm. The enzyme catalyses L-aspartate 4-semialdehyde + pyruvate = (2S,4S)-4-hydroxy-2,3,4,5-tetrahydrodipicolinate + H2O + H(+). Its pathway is amino-acid biosynthesis; L-lysine biosynthesis via DAP pathway; (S)-tetrahydrodipicolinate from L-aspartate: step 3/4. In terms of biological role, catalyzes the condensation of (S)-aspartate-beta-semialdehyde [(S)-ASA] and pyruvate to 4-hydroxy-tetrahydrodipicolinate (HTPA). In Aliivibrio salmonicida (strain LFI1238) (Vibrio salmonicida (strain LFI1238)), this protein is 4-hydroxy-tetrahydrodipicolinate synthase.